We begin with the raw amino-acid sequence, 453 residues long: Cyclic GMP-AMP phosphodiesterase SMPDL3A (453 aa).

A signal peptide spans 1–22 (MALVRALVCCLLTAWHCRSGLG). Zn(2+)-binding residues include aspartate 45 and histidine 47. A disulfide bridge links cysteine 62 with cysteine 81. A glycan (N-linked (GlcNAc...) asparagine) is linked at asparagine 69. Aspartate 110 serves as a coordination point for Zn(2+). Histidine 114 is a binding site for ATP. Residue asparagine 131 is glycosylated (N-linked (GlcNAc...) asparagine). Asparagine 151 serves as a coordination point for Zn(2+). Residues asparagine 151 and histidine 152 each coordinate ATP. Residues asparagine 222 and asparagine 238 are each glycosylated (N-linked (GlcNAc...) asparagine). Histidine 252 is a binding site for Zn(2+). The N-linked (GlcNAc...) asparagine glycan is linked to asparagine 263. Zn(2+)-binding residues include histidine 293 and histidine 295. A glycan (N-linked (GlcNAc...) asparagine) is linked at asparagine 356. 2 disulfide bridges follow: cysteine 420/cysteine 424 and cysteine 430/cysteine 443. Residue asparagine 437 is glycosylated (N-linked (GlcNAc...) asparagine).

This sequence belongs to the acid sphingomyelinase family. As to quaternary structure, monomer. Homodimer; homodimerizes following 2',3'-cGAMP-binding. It depends on Zn(2+) as a cofactor. Post-translationally, N-glycosylation is required for protein maturation, secretion and phosphodiesterase activity. As to expression, detected in blood serum. Detected in macrophages (at protein level).

Its subcellular location is the secreted. The enzyme catalyses 2',3'-cGAMP + H2O = 5'-pGpA(2'-5') + H(+). It catalyses the reaction 5'-pGpA(2'-5') + H2O = 5'-GpA(2'-5') + phosphate. The catalysed reaction is a ribonucleoside 5'-triphosphate + H2O = a ribonucleoside 5'-diphosphate + phosphate + H(+). It carries out the reaction ATP + H2O = ADP + phosphate + H(+). Requires micromolar levels of Zn(2+) for activity. Inhibited by millimolar levels of Zn(2+). Its function is as follows. Cyclic-nucleotide phosphodiesterase that acts as a negative regulator of innate immunity by mediating degradation of 2',3'-cGAMP, thereby inhibiting the cGAS-STING signaling. Specifically linearizes 2',3'-cGAMP into 2'5'-bond pGpA and further hydrolyzes pGpA to produce GpA. Also has in vitro nucleotide phosphodiesterase activity with nucleoside triphosphates, such as ATP. Has in vitro activity with p-nitrophenyl-TMP. Has lower activity with nucleoside diphosphates, and no activity with nucleoside monophosphates. Has in vitro activity with CDP-choline, giving rise to CMP and phosphocholine. Has in vitro activity with CDP-ethanolamine. Does not have sphingomyelin phosphodiesterase activity. The polypeptide is Cyclic GMP-AMP phosphodiesterase SMPDL3A (Homo sapiens (Human)).